Consider the following 454-residue polypeptide: MINIFEVNETNKMIEQEMLDVRTITLGISLLDCCDTDLDKLNTRIYEKITRVAKNLVAVGKEIEREYGIPIVNKRISVTPIALVGGQACSSPEDFVTIAKTLDRAAKEVGVNFLGGYSALVSKGMTKAERDLILSIPQALACTERICSSVNIGSTRTGINMDAVKLMGEIVLSTAEATKDQNSLGCAKLVVFCNAPDDNPFMAGAFHGVTEGDAVINVGVSGPGVVKHALEAVRGKNFEVLCETVKKTAFKVTRMGQLVALEASERLGIPFGIVDLSLAPTPSVGDSVAEILEEMGLESVGAPGTTAALALLNDQVKKGGVMASSFVGGLSGAFIPVSEDQGMIDAVNRGALTLEKLEAMTSVCSVGLDMIAIPGNTPATTIAGIIADEAAIGMINQKTTAVRLIPVIGKDIGDTVEFGGLLGYAPVQPVNKFSCANFINRGGRIPAPIHSFKN.

It belongs to the UPF0210 family.

The chain is UPF0210 protein Mlab_1030 from Methanocorpusculum labreanum (strain ATCC 43576 / DSM 4855 / Z).